A 513-amino-acid polypeptide reads, in one-letter code: ATP synthase subunit alpha (513 aa).

169–176 serves as a coordination point for ATP; it reads GDRQTGKT.

It belongs to the ATPase alpha/beta chains family. In terms of assembly, F-type ATPases have 2 components, CF(1) - the catalytic core - and CF(0) - the membrane proton channel. CF(1) has five subunits: alpha(3), beta(3), gamma(1), delta(1), epsilon(1). CF(0) has three main subunits: a(1), b(2) and c(9-12). The alpha and beta chains form an alternating ring which encloses part of the gamma chain. CF(1) is attached to CF(0) by a central stalk formed by the gamma and epsilon chains, while a peripheral stalk is formed by the delta and b chains.

The protein localises to the cell membrane. It catalyses the reaction ATP + H2O + 4 H(+)(in) = ADP + phosphate + 5 H(+)(out). In terms of biological role, produces ATP from ADP in the presence of a proton gradient across the membrane. The alpha chain is a regulatory subunit. In Polynucleobacter asymbioticus (strain DSM 18221 / CIP 109841 / QLW-P1DMWA-1) (Polynucleobacter necessarius subsp. asymbioticus), this protein is ATP synthase subunit alpha.